Consider the following 105-residue polypeptide: Replication restart protein PriB (105 aa).

The SSB domain maps to 1–102 (MTTNRLVLSG…LHAEQIEFID (102 aa)).

It belongs to the PriB family. In terms of assembly, homodimer. Interacts with PriA and DnaT. Component of the replication restart primosome. Primosome assembly occurs via a 'hand-off' mechanism. PriA binds to replication forks, subsequently PriB then DnaT bind; DnaT then displaces ssDNA to generate the helicase loading substrate.

Its function is as follows. Involved in the restart of stalled replication forks, which reloads the replicative helicase on sites other than the origin of replication; the PriA-PriB pathway is the major replication restart pathway. During primosome assembly it facilitates complex formation between PriA and DnaT on DNA; stabilizes PriA on DNA. Stimulates the DNA unwinding activity of PriA helicase. This is Replication restart protein PriB from Yersinia pseudotuberculosis serotype O:1b (strain IP 31758).